A 126-amino-acid polypeptide reads, in one-letter code: MKRFRIVAPLALMSLALAACETTGPGSGNAPIIAHTPAGIEGSWVDPNGIASSFNGGIFETRTTDTNEKLAEGNYLYLSPQLVEINMRSIVRGTTSKVNCALVSPTQLNCTSSAGSRFSLTRRNAG.

The N-terminal stretch at 1-19 is a signal peptide; sequence MKRFRIVAPLALMSLALAA. A lipid anchor (N-palmitoyl cysteine) is attached at Cys-20. Residue Cys-20 is the site of S-diacylglycerol cysteine attachment.

The protein belongs to the rhizobiaceae omp10 lipoprotein family.

The protein resides in the cell outer membrane. The polypeptide is Outer membrane lipoprotein omp10 (omp10) (Brucella abortus biovar 1 (strain 9-941)).